The sequence spans 233 residues: Homeobox protein not2 (233 aa).

Positions 135–194 form a DNA-binding region, homeobox; sequence LKRIRTVFTPEQLERLEKEFLKQQYMVGTERVDLASTLNLTETQVKVWFQNRRIKWRKQS. The tract at residues 212 to 233 is disordered; the sequence is SSDHTDDSRETEEEEDDVDVEL. The span at 220–233 shows a compositional bias: acidic residues; it reads RETEEEEDDVDVEL.

In terms of tissue distribution, localized to the dorsal lip of the blastopore (Spemann organizer) during early gastrulation, after which expression continues in tissues derived from the organizer. Expressed in the notochord during mid-gastrulation, the chordoneural hinge, notochord and ventral spinal cord of the tailbud at stage 22, and finally the tip of the tail in the tadpole (stage 35).

The protein localises to the nucleus. In terms of biological role, transcriptional repressor. Plays a fundamental role in notochord formation, acting within the mesodermal region. Acts downstream of gsc and upstream of chrd and foxa4-A/pintallavis. This Xenopus laevis (African clawed frog) protein is Homeobox protein not2.